Reading from the N-terminus, the 548-residue chain is Probable malate:quinone oxidoreductase (548 aa).

It belongs to the MQO family. It depends on FAD as a cofactor.

It carries out the reaction (S)-malate + a quinone = a quinol + oxaloacetate. The protein operates within carbohydrate metabolism; tricarboxylic acid cycle; oxaloacetate from (S)-malate (quinone route): step 1/1. This Escherichia coli O6:K15:H31 (strain 536 / UPEC) protein is Probable malate:quinone oxidoreductase.